A 369-amino-acid polypeptide reads, in one-letter code: Aspartate-semialdehyde dehydrogenase (369 aa).

NADP(+)-binding positions include 11-14 (RGMV), 38-39 (TS), and Gln75. Arg104 lines the phosphate pocket. Catalysis depends on Cys137, which acts as the Acyl-thioester intermediate. Gln164 lines the substrate pocket. Residues 167 to 168 (SG) and Pro195 contribute to the NADP(+) site. Substrate is bound at residue Glu243. Phosphate is bound at residue Lys246. Residue Arg269 coordinates substrate. Residue His276 is the Proton acceptor of the active site. Position 352 (Gln352) interacts with NADP(+).

The protein belongs to the aspartate-semialdehyde dehydrogenase family. Homodimer.

It catalyses the reaction L-aspartate 4-semialdehyde + phosphate + NADP(+) = 4-phospho-L-aspartate + NADPH + H(+). It participates in amino-acid biosynthesis; L-lysine biosynthesis via DAP pathway; (S)-tetrahydrodipicolinate from L-aspartate: step 2/4. Its pathway is amino-acid biosynthesis; L-methionine biosynthesis via de novo pathway; L-homoserine from L-aspartate: step 2/3. The protein operates within amino-acid biosynthesis; L-threonine biosynthesis; L-threonine from L-aspartate: step 2/5. Functionally, catalyzes the NADPH-dependent formation of L-aspartate-semialdehyde (L-ASA) by the reductive dephosphorylation of L-aspartyl-4-phosphate. The protein is Aspartate-semialdehyde dehydrogenase of Buchnera aphidicola subsp. Baizongia pistaciae (strain Bp).